Here is an 84-residue protein sequence, read N- to C-terminus: Small ribosomal subunit protein bS20 (84 aa).

The protein belongs to the bacterial ribosomal protein bS20 family.

Functionally, binds directly to 16S ribosomal RNA. The polypeptide is Small ribosomal subunit protein bS20 (Parabacteroides distasonis (strain ATCC 8503 / DSM 20701 / CIP 104284 / JCM 5825 / NCTC 11152)).